We begin with the raw amino-acid sequence, 708 residues long: MASPADSCIQFTRHASDVLLNLNRLRSRDILTDVVIIVNREQFRAHKTVLMACSGLFYSIFTDQLKCNLNVINLDPEINPEGFCILLDFMYTSRLNLRENNIMAVMATALYLQMEHVVDTCRRFVKSSEAEMVSAVKTPREEFLAGRMLNHPEVMAYRGRDVSENSMPLQNGSLCNGRAFAPGLFNSLPGSSISYPGYSPLPLNGFLVDDELREMRMPLSELSRVSAFPKERIPCDGSRTIPAEYMRTITDISANMCHATIYSPKEGAAEEARSDMHYSVASGPKPVVPSIRNNPYFSCDKVAKEEERTSSEDEISQHFEPTNTPLDRKGLISPQSPQKSDCQPNSPTESSSSKNARISQNSNSLFTKSPTDPKACNWKKYKFIVLNSLNQSTKQDSADQNEMGTLSPRTYMPMSTCQQSMEPEHLNVQSPTKMSVNGEDSNIPQASRLNNIVNRSRDGSPRSSEGQSPLYMHSSKCSSCGCQSPQHTEMCLHTSGSAFGEEMGETQSEYSDSSCENGAFFCNECDCRFSEEASLKRHSLQVHSDKPYKCDRCQASFRYKGNLASHKTVHTGEKPYRCNICGAQFNRPANLKTHTRIHSGEKPYKCETCGARFVQVAHLRAHVLIHTGEKPYPCEICGTRFRHLQTLKSHLRIHTGEKPYHCEKCNLHFRHKSQLRLHLRQKHGAITNTKVQYRISANEVPPELPKAC.

The region spanning 32 to 99 (TDVVIIVNRE…MYTSRLNLRE (68 aa)) is the BTB domain. Over residues 303–317 (AKEEERTSSEDEISQ) the composition is skewed to basic and acidic residues. Disordered stretches follow at residues 303 to 371 (AKEE…KSPT) and 431 to 470 (PTKM…QSPL). 2 stretches are compositionally biased toward polar residues: residues 333–370 (SPQS…TKSP) and 431–454 (PTKM…NIVN). 6 C2H2-type zinc fingers span residues 520 to 543 (FFCN…LQVH), 548 to 570 (YKCD…KTVH), 576 to 598 (YRCN…TRIH), 604 to 626 (YKCE…VLIH), 632 to 654 (YPCE…LRIH), and 660 to 683 (YHCE…RQKH).

It is found in the nucleus. In terms of biological role, transcriptional repressor mainly required for germinal center (GC) formation and antibody affinity maturation which has different mechanisms of action specific to the lineage and biological functions. Forms complexes with different corepressors and histone deacetylases to repress the transcriptional expression of different subsets of target genes. Represses its target genes by binding directly to the DNA sequence 5'-TTCCTAGAA-3' (BCL6-binding site) or indirectly by repressing the transcriptional activity of transcription factors. In GC B-cells, represses genes that function in differentiation, inflammation, apoptosis and cell cycle control, also autoregulates its transcriptional expression and up-regulates, indirectly, the expression of some genes important for GC reactions, such as AICDA, through the repression of microRNAs expression. An important function is to allow GC B-cells to proliferate very rapidly in response to T-cell dependent antigens and tolerate the physiological DNA breaks required for immunglobulin class switch recombination and somatic hypermutation without inducing a p53/TP53-dependent apoptotic response. In follicular helper CD4(+) T-cells (T(FH) cells), promotes the expression of T(FH)-related genes but inhibits the differentiation of T(H)1, T(H)2 and T(H)17 cells. Also required for the establishment and maintenance of immunological memory for both T- and B-cells. Suppresses macrophage proliferation through competition with STAT5 for STAT-binding motifs binding on certain target genes, such as CCL2 and CCND2. In response to genotoxic stress, controls cell cycle arrest in GC B-cells in both p53/TP53-dependedent and -independent manners. Besides, also controls neurogenesis through the alteration of the composition of NOTCH-dependent transcriptional complexes at selective NOTCH targets, such as HES5, including the recruitment of the deacetylase SIRT1 and resulting in an epigenetic silencing leading to neuronal differentiation. In Gallus gallus (Chicken), this protein is B-cell lymphoma 6 protein homolog.